The following is a 90-amino-acid chain: Small ribosomal subunit protein bS20 (90 aa).

Over residues 1–11 (MANIKSSEKDI) the composition is skewed to basic and acidic residues. Positions 1–29 (MANIKSSEKDIRRTKRRNAANSQNRSRLR) are disordered.

This sequence belongs to the bacterial ribosomal protein bS20 family.

Functionally, binds directly to 16S ribosomal RNA. The polypeptide is Small ribosomal subunit protein bS20 (Leptospira borgpetersenii serovar Hardjo-bovis (strain JB197)).